Reading from the N-terminus, the 161-residue chain is SsrA-binding protein (161 aa).

The protein belongs to the SmpB family.

Its subcellular location is the cytoplasm. In terms of biological role, required for rescue of stalled ribosomes mediated by trans-translation. Binds to transfer-messenger RNA (tmRNA), required for stable association of tmRNA with ribosomes. tmRNA and SmpB together mimic tRNA shape, replacing the anticodon stem-loop with SmpB. tmRNA is encoded by the ssrA gene; the 2 termini fold to resemble tRNA(Ala) and it encodes a 'tag peptide', a short internal open reading frame. During trans-translation Ala-aminoacylated tmRNA acts like a tRNA, entering the A-site of stalled ribosomes, displacing the stalled mRNA. The ribosome then switches to translate the ORF on the tmRNA; the nascent peptide is terminated with the 'tag peptide' encoded by the tmRNA and targeted for degradation. The ribosome is freed to recommence translation, which seems to be the essential function of trans-translation. This is SsrA-binding protein from Desulforamulus reducens (strain ATCC BAA-1160 / DSM 100696 / MI-1) (Desulfotomaculum reducens).